The chain runs to 568 residues: Sulfite reductase [NADPH] hemoprotein beta-component (568 aa).

The [4Fe-4S] cluster site is built by Cys425, Cys431, Cys470, and Cys474. Cys474 contacts siroheme.

The protein belongs to the nitrite and sulfite reductase 4Fe-4S domain family. Alpha(8)-beta(8). The alpha component is a flavoprotein, the beta component is a hemoprotein. Requires siroheme as cofactor. The cofactor is [4Fe-4S] cluster.

The enzyme catalyses hydrogen sulfide + 3 NADP(+) + 3 H2O = sulfite + 3 NADPH + 4 H(+). It functions in the pathway sulfur metabolism; hydrogen sulfide biosynthesis; hydrogen sulfide from sulfite (NADPH route): step 1/1. Functionally, component of the sulfite reductase complex that catalyzes the 6-electron reduction of sulfite to sulfide. This is one of several activities required for the biosynthesis of L-cysteine from sulfate. The polypeptide is Sulfite reductase [NADPH] hemoprotein beta-component (Xanthomonas euvesicatoria pv. vesicatoria (strain 85-10) (Xanthomonas campestris pv. vesicatoria)).